The following is a 404-amino-acid chain: Magnesium transporter NIPA4 (404 aa).

The Extracellular portion of the chain corresponds to 1 to 55 (MELRVSNTSCENGSLLHLYCSSQEVLCQIVNDLSPEVPSNATFHSWQERIRQNYG). N-linked (GlcNAc...) asparagine glycans are attached at residues Asn7, Asn12, and Asn40. A helical transmembrane segment spans residues 56 to 76 (FYIGLGLAFLSSFLIGSSVIL). Residues 77–102 (KKKGLLRLVATGATRAVDGGFGYLKD) lie on the Cytoplasmic side of the membrane. The helical transmembrane segment at 103–123 (AMWWAGFLTMAAGEVANFGAY) threads the bilayer. Ala124 is a topological domain (extracellular). The helical transmembrane segment at 125-145 (FAPATVVTPLGALSVLISAIL) threads the bilayer. The Cytoplasmic portion of the chain corresponds to 146–153 (SSYFLRES). Residues 154-174 (LNLLGKLGCVICVAGSTVMVI) form a helical membrane-spanning segment. Topologically, residues 175-195 (HAPEEEKVTTIMEMASKMKDT) are extracellular. A helical transmembrane segment spans residues 196 to 216 (GFIVFAVLLLVSCLILIFVIA). The Cytoplasmic segment spans residues 217–223 (PRYGQRN). Residues 224-244 (ILIYIIICSVIGAFSVAAVKG) traverse the membrane as a helical segment. At 245–261 (LGITIKNFFQGLPVVRH) the chain is on the extracellular side. Residues 262-282 (PLPYILSLILALSLSTQVNFL) traverse the membrane as a helical segment. The Cytoplasmic portion of the chain corresponds to 283-293 (NRALDIFNTSL). Residues 294–314 (VFPIYYVFFTTVVVTSSIILF) form a helical membrane-spanning segment. Residues 315–324 (KEWYSMSAVD) are Extracellular-facing. Residues 325–345 (IAGTLSGFVTIILGVFMLHAF) traverse the membrane as a helical segment. Topologically, residues 346–404 (KDLDISCASLPHMHKNPPPSPAPEPTVIRLEDKNVLVDNIELASTSSPEEKPKVFIIHS) are cytoplasmic.

It belongs to the NIPA family. In terms of tissue distribution, highly expressed in brain, lung, stomach, keratinocytes and leukocytes, and in all other tissues tested except liver, thyroid and fetal brain.

It is found in the cell membrane. The enzyme catalyses Mg(2+)(in) = Mg(2+)(out). Its function is as follows. Acts as a Mg(2+) transporter. Can also transport other divalent cations such as Ba(2+), Sr(2+) and Fe(2+) but to a much less extent than Mg(2+). May be a receptor for ligands (trioxilins A3 and B3) from the hepoxilin pathway. This is Magnesium transporter NIPA4 (NIPAL4) from Homo sapiens (Human).